The following is a 1207-amino-acid chain: DNA-directed RNA polymerase subunit beta' (1207 aa).

Zn(2+) contacts are provided by C60, C62, C75, and C78. Residues D449, D451, and D453 each contribute to the Mg(2+) site. Zn(2+)-binding residues include C822, C896, C903, and C906.

It belongs to the RNA polymerase beta' chain family. The RNAP catalytic core consists of 2 alpha, 1 beta, 1 beta' and 1 omega subunit. When a sigma factor is associated with the core the holoenzyme is formed, which can initiate transcription. It depends on Mg(2+) as a cofactor. The cofactor is Zn(2+).

The catalysed reaction is RNA(n) + a ribonucleoside 5'-triphosphate = RNA(n+1) + diphosphate. Its function is as follows. DNA-dependent RNA polymerase catalyzes the transcription of DNA into RNA using the four ribonucleoside triphosphates as substrates. The protein is DNA-directed RNA polymerase subunit beta' of Staphylococcus aureus (strain NCTC 8325 / PS 47).